Consider the following 440-residue polypeptide: Cyclic dipeptide prenyltransferase (440 aa).

The tract at residues 1–33 is disordered; that stretch reads MDGEMTASPPDISACDTSAVDEQTGQSGQSQAP. A compositionally biased stretch (polar residues) spans 20-32; that stretch reads VDEQTGQSGQSQA. 2 residues coordinate substrate: Thr-108 and Glu-116. Dimethylallyl diphosphate contacts are provided by Arg-129, Lys-219, and Tyr-221. Phe-223 contacts substrate. Dimethylallyl diphosphate is bound by residues Lys-286, Tyr-288, Tyr-366, Tyr-431, and Tyr-435.

The protein belongs to the tryptophan dimethylallyltransferase family.

It carries out the reaction harmol + dimethylallyl diphosphate = 6-(3-dimethylallyl)harmol + diphosphate. The enzyme catalyses an N-terminal L-tryptophanyl-L-alpha-aminoacyl-[peptide] + H2O = an N-terminal L-alpha-aminoacyl-[peptide] + L-tryptophan. It catalyses the reaction (R)-benzodiazepinedione + dimethylallyl diphosphate = (2S,3R,11R)-aszonalenin + diphosphate. The catalysed reaction is (S)-benzodiazepinedione + dimethylallyl diphosphate = (2S,3R,11S)-aszonalenin + diphosphate. Functionally, prenyltransferase that catalyzes reverse prenylation at position N-1 of tryptophan-containing cyclic dipeptides. Accepts only dimethylallyl diphosphate (DMAPP) as the prenyl donor but shows broad substrate specificities toward its aromatic substrates. Also shows tryptophan aminopeptidase activity with preference for linear peptides containing a tryptophanyl moiety at the N-terminus. The protein is Cyclic dipeptide prenyltransferase of Aspergillus fumigatus (Neosartorya fumigata).